Here is a 391-residue protein sequence, read N- to C-terminus: Phosphoglycerate kinase (391 aa).

Residues 21-23 (DLN), R36, 59-62 (HLGR), R113, and R146 contribute to the substrate site. Residues K197, E319, and 345-348 (GGDT) each bind ATP.

The protein belongs to the phosphoglycerate kinase family. In terms of assembly, monomer.

It localises to the cytoplasm. It catalyses the reaction (2R)-3-phosphoglycerate + ATP = (2R)-3-phospho-glyceroyl phosphate + ADP. It participates in carbohydrate degradation; glycolysis; pyruvate from D-glyceraldehyde 3-phosphate: step 2/5. The protein is Phosphoglycerate kinase of Shewanella piezotolerans (strain WP3 / JCM 13877).